The primary structure comprises 49 residues: Venom peptide 3 (49 aa).

The first 23 residues, 1-23, serve as a signal peptide directing secretion; sequence MRFTFVLVIAATVAVLGFFGINA. AXPX repeat units follow at residues 23–26 and 31–34; these read AEPM and AEPY. The propeptide occupies 24–37; that stretch reads EPMPDPHAEPYPDA. L48 is subject to Leucine amide.

As to expression, expressed by the venom gland.

It localises to the secreted. The polypeptide is Venom peptide 3 (Eumenes pomiformis (Potter wasp)).